The sequence spans 121 residues: MRPSLVRLVRPRRPERKTSPILPPLKLYKALLRAHANKLPVELRPLGDQYVKAEFKAHKNIDNPLHIVGFLAQWQDYLKGIDGGEWINGKLSQQDLEKMSPEQIGQLHELMEEAKKAGASE.

Residues 1-35 (MRPSLVRLVRPRRPERKTSPILPPLKLYKALLRAH) constitute a mitochondrion transit peptide.

The protein belongs to the complex I LYR family. SDHAF3 subfamily. In terms of assembly, interacts with the iron-sulfur protein subunit within the SDH catalytic dimer.

The protein resides in the mitochondrion matrix. Plays an essential role in the assembly of succinate dehydrogenase (SDH), an enzyme complex (also referred to as respiratory complex II) that is a component of both the tricarboxylic acid (TCA) cycle and the mitochondrial electron transport chain, and which couples the oxidation of succinate to fumarate with the reduction of ubiquinone (coenzyme Q) to ubiquinol. Promotes maturation of the iron-sulfur protein subunit of the SDH catalytic dimer, protecting it from the deleterious effects of oxidants. May act together with SDHAF1. The protein is Succinate dehydrogenase assembly factor 3, mitochondrial of Debaryomyces hansenii (strain ATCC 36239 / CBS 767 / BCRC 21394 / JCM 1990 / NBRC 0083 / IGC 2968) (Yeast).